The following is a 312-amino-acid chain: Olfactory receptor-like protein COR5 (312 aa).

At 1 to 26 the chain is on the extracellular side; it reads MALGNCTTPTTFILSGLTDNPRLQMP. N-linked (GlcNAc...) asparagine glycosylation occurs at N5. A helical membrane pass occupies residues 27 to 49; the sequence is LFMVFLAIYTITLLANLGLIALI. At 50-57 the chain is on the cytoplasmic side; sequence SVDFHLQT. Residues 58-79 traverse the membrane as a helical segment; that stretch reads PMYIFLQNLSFTDAAYSTVITP. The Extracellular portion of the chain corresponds to 80–100; the sequence is KMLATFLEERRTISYVGCILQ. A disulfide bridge links C97 with C179. Residues 101-120 traverse the membrane as a helical segment; the sequence is YFSFVLLTSSECLLLAVMAY. Over 121 to 139 the chain is Cytoplasmic; it reads DRYVAICKPLLYPAIMTKA. The helical transmembrane segment at 140–164 threads the bilayer; that stretch reads VCWRLVEGLYSLAFLNSLVHTSGLL. At 165 to 205 the chain is on the extracellular side; it reads KLSFCSSNVVNHFFCDNSPLFQISSSSTTLNELLVFIFGSW. The helical transmembrane segment at 206 to 226 threads the bilayer; the sequence is FAMSSIITTPISYVFIILTVV. Residues 227–239 are Cytoplasmic-facing; sequence RIRSKDGKYKAFS. A helical transmembrane segment spans residues 240–260; it reads TCTSHLMAVSLFHGTVIFMYL. The Extracellular segment spans residues 261–271; that stretch reads RPVKLFSLDTD. The helical transmembrane segment at 272–292 threads the bilayer; the sequence is KIASLFYTVVIPMLNPLIYSW. At 293 to 312 the chain is on the cytoplasmic side; sequence RNKEVKDALRRVIATNVWIH.

Belongs to the G-protein coupled receptor 1 family.

The protein localises to the cell membrane. Odorant receptor. The protein is Olfactory receptor-like protein COR5 (COR5) of Gallus gallus (Chicken).